The sequence spans 335 residues: Methylthioribose-1-phosphate isomerase (335 aa).

Substrate-binding positions include 43 to 45 (RGA), arginine 86, and glutamine 193. The active-site Proton donor is the aspartate 234. 244 to 245 (NK) contacts substrate.

This sequence belongs to the eIF-2B alpha/beta/delta subunits family. MtnA subfamily.

It carries out the reaction 5-(methylsulfanyl)-alpha-D-ribose 1-phosphate = 5-(methylsulfanyl)-D-ribulose 1-phosphate. Its pathway is amino-acid biosynthesis; L-methionine biosynthesis via salvage pathway; L-methionine from S-methyl-5-thio-alpha-D-ribose 1-phosphate: step 1/6. Functionally, catalyzes the interconversion of methylthioribose-1-phosphate (MTR-1-P) into methylthioribulose-1-phosphate (MTRu-1-P). In Parabacteroides distasonis (strain ATCC 8503 / DSM 20701 / CIP 104284 / JCM 5825 / NCTC 11152), this protein is Methylthioribose-1-phosphate isomerase.